We begin with the raw amino-acid sequence, 539 residues long: Chaperonin GroEL (539 aa).

Residues 30–33 (TLGP), 87–91 (DGTTT), Gly414, 479–481 (DAL), and Asp495 contribute to the ATP site.

Belongs to the chaperonin (HSP60) family. Forms a cylinder of 14 subunits composed of two heptameric rings stacked back-to-back. Interacts with the co-chaperonin GroES.

Its subcellular location is the cytoplasm. The enzyme catalyses ATP + H2O + a folded polypeptide = ADP + phosphate + an unfolded polypeptide.. Functionally, together with its co-chaperonin GroES, plays an essential role in assisting protein folding. The GroEL-GroES system forms a nano-cage that allows encapsulation of the non-native substrate proteins and provides a physical environment optimized to promote and accelerate protein folding. The polypeptide is Chaperonin GroEL (Caldicellulosiruptor saccharolyticus (strain ATCC 43494 / DSM 8903 / Tp8T 6331)).